We begin with the raw amino-acid sequence, 278 residues long: uncharacterized protein (278 aa).

Residues 1 to 20 (MSPLIVGTLIIILLSGLATA) form the signal peptide. The GPI-anchor amidated glycine moiety is linked to residue Gly-96. Residues 97–278 (TFLTSPTAKR…QLIMQTFNGS (182 aa)) constitute a propeptide, removed in mature form.

It is found in the cell membrane. This is an uncharacterized protein from Schizosaccharomyces pombe (strain 972 / ATCC 24843) (Fission yeast).